A 47-amino-acid polypeptide reads, in one-letter code: Defensin Tk-AMP-D1.1 (47 aa).

4 disulfide bridges follow: cysteine 3-cysteine 47, cysteine 14-cysteine 34, cysteine 20-cysteine 41, and cysteine 24-cysteine 43.

Plant defense peptide. This is Defensin Tk-AMP-D1.1 from Triticum kiharae (Wheat).